We begin with the raw amino-acid sequence, 55 residues long: Large ribosomal subunit protein bL33 (55 aa).

Belongs to the bacterial ribosomal protein bL33 family.

This chain is Large ribosomal subunit protein bL33, found in Hyphomonas neptunium (strain ATCC 15444).